A 438-amino-acid polypeptide reads, in one-letter code: Putative phospholipase A2 (438 aa).

Residue Ser257 is the Nucleophile of the active site. Catalysis depends on charge relay system residues Asp291 and His368.

This sequence belongs to the serine esterase family.

Its subcellular location is the cytoplasm. The protein resides in the nucleus. The catalysed reaction is a 1-O-alkyl-2-acetyl-sn-glycero-3-phosphocholine + H2O = a 1-O-alkyl-sn-glycero-3-phosphocholine + acetate + H(+). The chain is Putative phospholipase A2 from Schizosaccharomyces pombe (strain 972 / ATCC 24843) (Fission yeast).